The primary structure comprises 311 residues: MNNGTSPAGGETEATQTRSGFVALIGAPNAGKSTLVNQLVGTKVSIVTHKVQTTRALVRGIFIEGPAQIVLVDTPGIFRPKRRLDRAMVTTAWGGAKDADIILVIIDAQGGFNENAEALLESMKDVRQKKVLVLNKVDRVDPPVLLSLAQKANELVPFDRTFMISALNGSGCKDLAKYLAESVPNGPWYYPEDQISDIPMRQLAAEITREKLYLRLHEELPYASTVETERWEERKDGSVRIEQVIYVERESQKKIVLGHKGETVKAIGQAARKEISEILEQTVHLFLFVKVRENWGNDPERYREMGLDFPT.

The Era-type G domain occupies 18–185; that stretch reads RSGFVALIGA…AKYLAESVPN (168 aa). A G1 region spans residues 26–33; sequence GAPNAGKS. 26 to 33 lines the GTP pocket; the sequence is GAPNAGKS. A G2 region spans residues 52–56; it reads QTTRA. Positions 73–76 are G3; it reads DTPG. Residues 73–77 and 135–138 contribute to the GTP site; these read DTPGI and NKVD. Residues 135-138 are G4; the sequence is NKVD. Positions 164–166 are G5; sequence ISA. The KH type-2 domain occupies 216 to 293; it reads LHEELPYAST…HLFLFVKVRE (78 aa).

Belongs to the TRAFAC class TrmE-Era-EngA-EngB-Septin-like GTPase superfamily. Era GTPase family. As to quaternary structure, monomer.

It is found in the cytoplasm. Its subcellular location is the cell inner membrane. Its function is as follows. An essential GTPase that binds both GDP and GTP, with rapid nucleotide exchange. Plays a role in 16S rRNA processing and 30S ribosomal subunit biogenesis and possibly also in cell cycle regulation and energy metabolism. The protein is GTPase Era of Brucella suis biovar 1 (strain 1330).